A 299-amino-acid chain; its full sequence is Cycloserine biosynthesis protein DcsG (299 aa).

Residues lysine 92, lysine 137, serine 144, glutamine 175, proline 176, and valine 178 each contribute to the ATP site. An ATP-grasp domain is found at 95–298; it reads LADLAAHGVP…FAQALAERLK (204 aa). Catalysis depends on residues arginine 220 and arginine 254. Glutamate 269 and glutamate 271 together coordinate Mg(2+). Glutamate 271 is a catalytic residue.

Monomer. Requires Mg(2+) as cofactor.

The enzyme catalyses O-ureido-D-serine + ATP + H2O + H(+) = D-cycloserine + NH4(+) + ADP + phosphate + CO2. Functionally, involved in the biosynthesis of the antibiotic D-cycloserine (DCS), a cyclic structural analog of D-alanine, used as an antitubercular agent. Catalyzes the synthesis of D-cycloserine from O-ureido-D-serine (D-OUS). It reacts with D-OUS, D-homocysteine and beta-aminooxy-D-alanine. This is Cycloserine biosynthesis protein DcsG from Streptomyces lavendulae.